The following is a 226-amino-acid chain: GTP-binding nuclear protein Ran (226 aa).

Residues 3 to 184 (DPISFKVILV…LSILRTLLND (182 aa)) form the Small GTPase Ran-type domain. Position 14–21 (14–21 (DGATGKTT)) interacts with GTP. The segment at 33-41 (KQYISTIGV) is switch-I. GTP is bound by residues Gly-70, 135-138 (NKCD), and 163-165 (SAK). The tract at residues 70 to 86 (GQEKFGGLRDGYYVDSD) is switch-II.

Belongs to the small GTPase superfamily. Ran family. As to quaternary structure, found in a nuclear export complex with RanGTP, exportin and pre-miRNA.

The protein localises to the nucleus. In terms of biological role, GTP-binding protein involved in nucleocytoplasmic transport. Required for the import of protein into the nucleus and also for RNA export. Involved in chromatin condensation and control of cell cycle. This Giardia intestinalis (Giardia lamblia) protein is GTP-binding nuclear protein Ran.